A 440-amino-acid polypeptide reads, in one-letter code: 6-phospho-alpha-glucosidase (440 aa).

4-70 (FSIVVAGGGS…PDINFVYTTD (67 aa)) contributes to the NAD(+) binding site. Substrate-binding residues include Arg93 and Asn147. A Mn(2+)-binding site is contributed by Cys169. The Proton donor role is filled by Asp170. A Mn(2+)-binding site is contributed by His200. Catalysis depends on Tyr263, which acts as the Proton acceptor. Arg283 serves as a coordination point for substrate.

This sequence belongs to the glycosyl hydrolase 4 family. Homodimer. It depends on NAD(+) as a cofactor. Requires Mn(2+) as cofactor.

Its pathway is glycan degradation; palatinose degradation. In vitro, readily hydrolyzes p-nitrophenyl-alpha-D-glucopyranoside 6-phosphate (pNPalphaG6P), a chromogenic analog of the phosphorylated isomers of sucrose. In vivo, is probably involved in the degradation of the 6-phosphate derivatives of the sucrose isomers trehalulose, turanose, maltulose and palatinose, catalyzing their hydrolysis into glucose 6-phosphate (G6P) and fructose, which allows the bacterium to use these sugars as energy sources for growth. Is not able to hydrolyze the C2 or C4 chromogenic stereomers (i.e. pNPalpha-mannopyranoside-6P and pNPalpha-galactopyranoside-6P, respectively). This is 6-phospho-alpha-glucosidase (pagL) from Leptotrichia buccalis (strain ATCC 14201 / DSM 1135 / JCM 12969 / NCTC 10249 / C-1013-b).